The primary structure comprises 636 residues: Threonine--tRNA ligase (636 aa).

In terms of domain architecture, TGS spans 1–63; the sequence is MNEINVTLPD…ADGARVEIIT (63 aa). The interval 243 to 534 is catalytic; the sequence is DHRKLGRELD…LIEHFAGNFP (292 aa). 3 residues coordinate Zn(2+): Cys335, His386, and His511.

The protein belongs to the class-II aminoacyl-tRNA synthetase family. In terms of assembly, homodimer. It depends on Zn(2+) as a cofactor.

Its subcellular location is the cytoplasm. It catalyses the reaction tRNA(Thr) + L-threonine + ATP = L-threonyl-tRNA(Thr) + AMP + diphosphate + H(+). Catalyzes the attachment of threonine to tRNA(Thr) in a two-step reaction: L-threonine is first activated by ATP to form Thr-AMP and then transferred to the acceptor end of tRNA(Thr). Also edits incorrectly charged L-seryl-tRNA(Thr). The chain is Threonine--tRNA ligase from Citrifermentans bemidjiense (strain ATCC BAA-1014 / DSM 16622 / JCM 12645 / Bem) (Geobacter bemidjiensis).